A 692-amino-acid chain; its full sequence is MNKLQLLGVVFAKVNECSLELSCVRYCDPNLLLTKRKEFLHNAFVCKYLCDSLLSELQHFSCTNGLTACKHLAIILENLCEHFYVINKALCSFEIHKDHQQYYRTLFDVDQCSLHDPIKISFVNKQDLEITLTDFNEIERFLCKLNLIFPLIDARSGMRIISQIYDRLRKFTGISPLARLEFYKSACGGCYLCYEELQMTPNNGSSVQKRLNGVLCEHVTYTKDLVFQENEYLEVLREDLKRDNLLREDMRTELDDMKKILSNKKERGFYVPEAEQLLHRYDVFTDDIPNYIYTLSDLTYWSKTSEKIIKTMNMTMQQLNVYNNNMIKLKRSISRALNDIEVRDCFDVFEKVVDKRHCMFLGSMFTSSAKIISLLATQCLTAFEEKAVFERLNECDALCSTVNTILERLKSASGDGKEGITKQDFQADELIKGYNVSDEVSVRKKTYLNKVADKGYSKIVASLSTEERSIKKLIDINFLGTLCIDMMVKLEKMFYKRSQIGQMVENGVHLLALCNYDNHLYIRNNLSRQSISTENVNGVIQHILSFLCGPIFTHRHDIFPMPPNIDMAYACDNANVLPHRKEELMQCVNDITSVHGWSISSYNTFFKIDSVDLNTAHAHVWGYVKEFIVAVTLYNELYGQRLRAFRVDENTIRECGLYLTYNSDIPLVLKTDKNVIYGSDIYSILYAHMHHA.

Residues 190-218 form a C3H1-type zinc finger; that stretch reads CYLCYEELQMTPNNGSSVQKRLNGVLCEH. 634 to 641 is a binding site for ATP; the sequence is YNELYGQR.

Belongs to the herpesviridae TRM1 protein family. As to quaternary structure, associates with TRM2 and TRM3 to form the tripartite terminase complex. Interacts with portal protein.

The protein resides in the host nucleus. In terms of biological role, component of the molecular motor that translocates viral genomic DNA in empty capsid during DNA packaging. Forms a tripartite terminase complex together with TRM2 and TRM3 in the host cytoplasm. Once the complex reaches the host nucleus, it interacts with the capsid portal vertex. This portal forms a ring in which genomic DNA is translocated into the capsid. TRM1 carries an endonuclease activity that plays an important role for the cleavage of concatemeric viral DNA into unit length genomes. This Elephas maximus (Indian elephant) protein is Tripartite terminase subunit 1.